The sequence spans 218 residues: Dynein axonemal assembly factor 6 (218 aa).

The disordered stretch occupies residues 66-103 (MGPGNIGPPKAKESKAIPEPRSDESENIWNPEEVPEGA). The span at 75-89 (KAKESKAIPEPRSDE) shows a compositional bias: basic and acidic residues.

It belongs to the PIH1 family. As to quaternary structure, interacts with HSPA1A/B, HSP90AA1 and DNAI2. Interacts with DNAAF2 and DNAAF4. Specifically expressed in testis. Detected in pachytene spermatocytes from 5 weeks of age and in pachytene and diplotene spermatocytes of adult mice. Not detected in spermatids or mature sperm.

The protein resides in the cytoplasm. It localises to the golgi apparatus. The protein localises to the trans-Golgi network. Its function is as follows. Plays a role in cytoplasmic pre-assembly of axonemal dynein. The polypeptide is Dynein axonemal assembly factor 6 (Mus musculus (Mouse)).